We begin with the raw amino-acid sequence, 450 residues long: MKVIDQFKNKKVLVLGLAKSGESAARLLDKLGAIVTVNDGKPFEDNPAAQSLLEEGIKVITGGHPLELLDEEFALMVKNPGIPYNNPMIEKALAKGIPVLTEVELAYLISEAPIIGITGSNGKTTTTTMIGEVLTAAGQHGLLSGNIGYPASQVAQIASDKDTLVMELSSFQLMGVQEFHPEIAVITNLMPTHIDYHGSFSEYVAAKWNIQNKMTAADFLVLNFNQDLAKDLTSKTEATVVPFSTLEKVDGAYLEDGQLYFRGEVVMAANEIGVPGSHNVENALATIAVAKLRDVDNQTIKETLSAFGGVKHRLQFVDDIKGVKFYNDSKSTNILATQKALSGFDNSKVVLIAGGLDRGNEFDELVPDITGLKKMVILGQSAERVKRAADKAGVAYVEATDIADATRKAYELATQGDVVLLSPANASWDMYANFEVRGDLFIDTVAELKE.

Residue 119–125 (GSNGKTT) coordinates ATP.

It belongs to the MurCDEF family.

The protein localises to the cytoplasm. The enzyme catalyses UDP-N-acetyl-alpha-D-muramoyl-L-alanine + D-glutamate + ATP = UDP-N-acetyl-alpha-D-muramoyl-L-alanyl-D-glutamate + ADP + phosphate + H(+). The protein operates within cell wall biogenesis; peptidoglycan biosynthesis. Cell wall formation. Catalyzes the addition of glutamate to the nucleotide precursor UDP-N-acetylmuramoyl-L-alanine (UMA). The sequence is that of UDP-N-acetylmuramoylalanine--D-glutamate ligase from Streptococcus pneumoniae serotype 4 (strain ATCC BAA-334 / TIGR4).